Reading from the N-terminus, the 274-residue chain is MKIELASSYGFCFGVKRAIKIAENAGDAATIGPLIHNNEEISRLEKNYNVKTLEGIDELKDEKKAIIRTHGITKNDLAELKKTDIKVIDATCPFVTKPQQICEKMSEEGYDVVIFGDMHHPEVKGVKSYAKGNVYVVLEESELEGIKFKQKVALVSQTTRKVEKFMQIANYLMLHVKELRVFNTICNATFENQEAAKNLAKRADVMIIIGGKNSSNTKQLYLISKNFCEDSYLIESEEELERSWFDGKNLCGISAGASTPDWIIQKVVDRIKKV.

C12 lines the [4Fe-4S] cluster pocket. (2E)-4-hydroxy-3-methylbut-2-enyl diphosphate-binding residues include H36 and H70. Positions 36 and 70 each coordinate dimethylallyl diphosphate. Isopentenyl diphosphate is bound by residues H36 and H70. C92 contacts [4Fe-4S] cluster. Residue H120 participates in (2E)-4-hydroxy-3-methylbut-2-enyl diphosphate binding. Residue H120 coordinates dimethylallyl diphosphate. An isopentenyl diphosphate-binding site is contributed by H120. The active-site Proton donor is E122. (2E)-4-hydroxy-3-methylbut-2-enyl diphosphate is bound at residue T158. C186 contributes to the [4Fe-4S] cluster binding site. (2E)-4-hydroxy-3-methylbut-2-enyl diphosphate-binding residues include S214, S215, N216, and S258. S214, S215, N216, and S258 together coordinate dimethylallyl diphosphate. Isopentenyl diphosphate-binding residues include S214, S215, N216, and S258.

Belongs to the IspH family. The cofactor is [4Fe-4S] cluster.

The catalysed reaction is isopentenyl diphosphate + 2 oxidized [2Fe-2S]-[ferredoxin] + H2O = (2E)-4-hydroxy-3-methylbut-2-enyl diphosphate + 2 reduced [2Fe-2S]-[ferredoxin] + 2 H(+). The enzyme catalyses dimethylallyl diphosphate + 2 oxidized [2Fe-2S]-[ferredoxin] + H2O = (2E)-4-hydroxy-3-methylbut-2-enyl diphosphate + 2 reduced [2Fe-2S]-[ferredoxin] + 2 H(+). It functions in the pathway isoprenoid biosynthesis; dimethylallyl diphosphate biosynthesis; dimethylallyl diphosphate from (2E)-4-hydroxy-3-methylbutenyl diphosphate: step 1/1. Its pathway is isoprenoid biosynthesis; isopentenyl diphosphate biosynthesis via DXP pathway; isopentenyl diphosphate from 1-deoxy-D-xylulose 5-phosphate: step 6/6. Functionally, catalyzes the conversion of 1-hydroxy-2-methyl-2-(E)-butenyl 4-diphosphate (HMBPP) into a mixture of isopentenyl diphosphate (IPP) and dimethylallyl diphosphate (DMAPP). Acts in the terminal step of the DOXP/MEP pathway for isoprenoid precursor biosynthesis. This chain is 4-hydroxy-3-methylbut-2-enyl diphosphate reductase, found in Campylobacter concisus (strain 13826).